The following is a 438-amino-acid chain: UDP-N-acetylmuramoylalanine--D-glutamate ligase (438 aa).

Position 112–118 (112–118) interacts with ATP; the sequence is GSNGKST.

Belongs to the MurCDEF family.

The protein resides in the cytoplasm. The catalysed reaction is UDP-N-acetyl-alpha-D-muramoyl-L-alanine + D-glutamate + ATP = UDP-N-acetyl-alpha-D-muramoyl-L-alanyl-D-glutamate + ADP + phosphate + H(+). It functions in the pathway cell wall biogenesis; peptidoglycan biosynthesis. In terms of biological role, cell wall formation. Catalyzes the addition of glutamate to the nucleotide precursor UDP-N-acetylmuramoyl-L-alanine (UMA). The protein is UDP-N-acetylmuramoylalanine--D-glutamate ligase (murD) of Escherichia coli O6:H1 (strain CFT073 / ATCC 700928 / UPEC).